The primary structure comprises 80 residues: U19-lycotoxin-Ls1a (80 aa).

The N-terminal stretch at 1 to 22 (MSPKVQALIFIVGLITLLAAHA) is a signal peptide. Residues 23–34 (QEELSDNTESER) constitute a propeptide that is removed on maturation. 4 disulfide bridges follow: C36–C50, C43–C55, C49–C66, and C57–C64.

The protein belongs to the neurotoxin 02 (plectoxin) family. 05 (U19-lycotoxin) subfamily. Expressed by the venom gland.

It localises to the secreted. The protein is U19-lycotoxin-Ls1a of Lycosa singoriensis (Wolf spider).